Consider the following 198-residue polypeptide: Nudix hydrolase 21, chloroplastic (198 aa).

The N-terminal 37 residues, 1–37, are a transit peptide targeting the chloroplast; the sequence is MISLFISNFSNLSNLSPTFDNMNMNIPSKKIVPVPTP. In terms of domain architecture, Nudix hydrolase spans 59-191; it reads GYRQVVGCVP…WMREALEAFI (133 aa). The short motif at 98–119 is the Nudix box element; it reads GGWEIDESIEEAALRETIEEAG. Glutamate 113 and glutamate 117 together coordinate Mg(2+).

It belongs to the Nudix hydrolase family. The cofactor is Mg(2+). Mn(2+) serves as cofactor. Expressed in roots, leaves, stems and inflorescences.

The protein localises to the plastid. It is found in the chloroplast. Probably mediates the hydrolysis of some nucleoside diphosphate derivatives. The protein is Nudix hydrolase 21, chloroplastic (NUDT21) of Arabidopsis thaliana (Mouse-ear cress).